Reading from the N-terminus, the 622-residue chain is Low affinity potassium transport system protein Kup (622 aa).

The next 12 helical transmembrane spans lie at 9-29 (LPAI…TSPL), 49-69 (VFGF…IKYL), 103-123 (VIMG…TPAI), 137-157 (PQLD…LFMI), 165-185 (VGKL…VLGL), 213-233 (VSFI…ALYA), 247-267 (WFTV…ALLL), 276-296 (PFFL…AALA), 337-357 (IYIP…IVSF), 363-383 (LAAA…ILST), 396-416 (FVAL…SANL), and 419-439 (LLSG…IMTT).

The protein belongs to the HAK/KUP transporter (TC 2.A.72) family.

It localises to the cell inner membrane. It catalyses the reaction K(+)(in) + H(+)(in) = K(+)(out) + H(+)(out). Functionally, responsible for the low-affinity transport of potassium into the cell. Likely operates as a K(+):H(+) symporter. This Salmonella paratyphi B (strain ATCC BAA-1250 / SPB7) protein is Low affinity potassium transport system protein Kup.